A 250-amino-acid polypeptide reads, in one-letter code: Triosephosphate isomerase, cytosolic (250 aa).

2 residues coordinate substrate: Asn-1 and Lys-3. Catalysis depends on His-87, which acts as the Electrophile. Catalysis depends on Glu-160, which acts as the Proton acceptor.

It belongs to the triosephosphate isomerase family. Homodimer.

Its subcellular location is the cytoplasm. The catalysed reaction is D-glyceraldehyde 3-phosphate = dihydroxyacetone phosphate. It participates in carbohydrate biosynthesis; gluconeogenesis. Its pathway is carbohydrate degradation; glycolysis; D-glyceraldehyde 3-phosphate from glycerone phosphate: step 1/1. The chain is Triosephosphate isomerase, cytosolic (TPI1) from Gracilaria gracilis (Red alga).